A 364-amino-acid chain; its full sequence is Long-wave-sensitive opsin 1 (364 aa).

The segment at 1 to 23 (MAQQWSLQRLAGRHPQDSYEDST) is disordered. Residues 1–52 (MAQQWSLQRLAGRHPQDSYEDSTQSSIFTYTNSNSTRGPFEGPNYHIAPRWV) are Extracellular-facing. S22 is a glycosylation site (O-linked (GlcNAc) serine). N34 is a glycosylation site (N-linked (GlcNAc...) asparagine). A helical transmembrane segment spans residues 53–77 (YHLTSVWMIFVVTASVFTNGLVLAA). Residues 78–89 (TMKFKKLRHPLN) lie on the Cytoplasmic side of the membrane. A helical membrane pass occupies residues 90-115 (WILVNLAVADLAETVIASTISIVNQV). Over 116–129 (SGYFVLGHPMCVLE) the chain is Extracellular. An intrachain disulfide couples C126 to C203. The helical transmembrane segment at 130 to 149 (GYTVSLCGITGLWSLAIISW) threads the bilayer. Topologically, residues 150 to 168 (ERWMVVCKPFGNVRFDAKL) are cytoplasmic. Residues 169 to 192 (AIVGIAFSWIWAAVWTAPPIFGWS) form a helical membrane-spanning segment. Residues 193 to 218 (RYWPHGLKTSCGPDVFSGSSYPGVQS) lie on the Extracellular side of the membrane. The chain crosses the membrane as a helical span at residues 219-246 (YMIVLMVTCCIIPLAIIMLCYLQVWLAI). Residues 247-268 (RAVAKQQKESESTQKAEKEVTR) are Cytoplasmic-facing. The chain crosses the membrane as a helical span at residues 269-292 (MVVVMIFAYCVCWGPYTFFACFAA). Residues 293-300 (ANPGYAFH) are Extracellular-facing. The helical transmembrane segment at 301 to 325 (PLMAALPAYFAKSATIYNPVIYVFM) threads the bilayer. Residue K312 is modified to N6-(retinylidene)lysine. Topologically, residues 326-364 (NRQFRNCILQLFGKKVDDGSELSSASKTEVSSVSSVSPA) are cytoplasmic.

The protein belongs to the G-protein coupled receptor 1 family. Opsin subfamily. Post-translationally, phosphorylated on some or all of the serine and threonine residues present in the C-terminal region. In terms of tissue distribution, the three color pigments are found in the cone photoreceptor cells.

The protein resides in the membrane. Functionally, visual pigments are the light-absorbing molecules that mediate vision. They consist of an apoprotein, opsin, covalently linked to cis-retinal. The polypeptide is Long-wave-sensitive opsin 1 (OPN1LW) (Homo sapiens (Human)).